We begin with the raw amino-acid sequence, 164 residues long: UBA-like domain-containing protein 2 (164 aa).

Ser2 bears the N-acetylserine mark. Residues 144-164 (PPGASQGGAPQKAMAAMDGQR) are disordered.

The protein belongs to the UBALD family.

This is UBA-like domain-containing protein 2 (Ubald2) from Mus musculus (Mouse).